The sequence spans 102 residues: Large ribosomal subunit protein bL21 (102 aa).

The protein belongs to the bacterial ribosomal protein bL21 family. In terms of assembly, part of the 50S ribosomal subunit. Contacts protein L20.

This protein binds to 23S rRNA in the presence of protein L20. The chain is Large ribosomal subunit protein bL21 from Onion yellows phytoplasma (strain OY-M).